Here is a 507-residue protein sequence, read N- to C-terminus: ATP synthase subunit alpha (507 aa).

Position 169–176 (169–176 (GDRQTGKT)) interacts with ATP.

This sequence belongs to the ATPase alpha/beta chains family. As to quaternary structure, F-type ATPases have 2 components, CF(1) - the catalytic core - and CF(0) - the membrane proton channel. CF(1) has five subunits: alpha(3), beta(3), gamma(1), delta(1), epsilon(1). CF(0) has three main subunits: a(1), b(2) and c(9-12). The alpha and beta chains form an alternating ring which encloses part of the gamma chain. CF(1) is attached to CF(0) by a central stalk formed by the gamma and epsilon chains, while a peripheral stalk is formed by the delta and b chains.

The protein resides in the cell membrane. The enzyme catalyses ATP + H2O + 4 H(+)(in) = ADP + phosphate + 5 H(+)(out). Functionally, produces ATP from ADP in the presence of a proton gradient across the membrane. The alpha chain is a regulatory subunit. The chain is ATP synthase subunit alpha from Desulforudis audaxviator (strain MP104C).